Here is an 89-residue protein sequence, read N- to C-terminus: Small ribosomal subunit protein uS15 (89 aa).

It belongs to the universal ribosomal protein uS15 family. Part of the 30S ribosomal subunit. Forms a bridge to the 50S subunit in the 70S ribosome, contacting the 23S rRNA.

One of the primary rRNA binding proteins, it binds directly to 16S rRNA where it helps nucleate assembly of the platform of the 30S subunit by binding and bridging several RNA helices of the 16S rRNA. Its function is as follows. Forms an intersubunit bridge (bridge B4) with the 23S rRNA of the 50S subunit in the ribosome. The polypeptide is Small ribosomal subunit protein uS15 (Cupriavidus necator (strain ATCC 17699 / DSM 428 / KCTC 22496 / NCIMB 10442 / H16 / Stanier 337) (Ralstonia eutropha)).